Here is a 273-residue protein sequence, read N- to C-terminus: NADPH-dependent 7-cyano-7-deazaguanine reductase (273 aa).

80-82 (VES) is a binding site for substrate. 82-83 (SK) contributes to the NADPH binding site. Residue cysteine 180 is the Thioimide intermediate of the active site. Aspartate 187 acts as the Proton donor in catalysis. Residue 219 to 220 (HE) coordinates substrate. 248–249 (RG) provides a ligand contact to NADPH.

The protein belongs to the GTP cyclohydrolase I family. QueF type 2 subfamily. As to quaternary structure, homodimer.

It is found in the cytoplasm. The enzyme catalyses 7-aminomethyl-7-carbaguanine + 2 NADP(+) = 7-cyano-7-deazaguanine + 2 NADPH + 3 H(+). It participates in tRNA modification; tRNA-queuosine biosynthesis. Functionally, catalyzes the NADPH-dependent reduction of 7-cyano-7-deazaguanine (preQ0) to 7-aminomethyl-7-deazaguanine (preQ1). The sequence is that of NADPH-dependent 7-cyano-7-deazaguanine reductase from Bordetella pertussis (strain Tohama I / ATCC BAA-589 / NCTC 13251).